Reading from the N-terminus, the 778-residue chain is Arf-GAP with coiled-coil, ANK repeat and PH domain-containing protein 2 (778 aa).

Residues 1–226 (MKMTVDFEEC…MKDLGAQLDR (226 aa)) enclose the BAR domain. One can recognise a PH domain in the interval 266 to 361 (GIVMEGYLFK…WIKAVQTSIA (96 aa)). Positions 371 to 391 (SEKLDKKSSPSTGSLDSGNES) are disordered. Residues 379 to 388 (SPSTGSLDSG) are compositionally biased toward polar residues. 2 positions are modified to phosphoserine: Ser384 and Ser387. Positions 399-520 (ESALQRVQCV…KFVDKYSVSS (122 aa)) constitute an Arf-GAP domain. Residues 414 to 437 (CCDCGLADPRWASINLGITLCIEC) form a C4-type zinc finger. A disordered region spans residues 518–596 (VSSSPPEQEK…EPEGERQDSS (79 aa)). Ser521 carries the post-translational modification Phosphoserine. Residues 524 to 539 (EQEKKVVSKDSEEKRL) show a composition bias toward basic and acidic residues. The span at 550 to 569 (VRTSIQSSVKSNDSGIQQSS) shows a compositional bias: polar residues. Phosphoserine is present on residues Ser581 and Ser584. ANK repeat units follow at residues 640-669 (NKAT…NVNQ), 673-702 (QGRG…NQHA), and 706-735 (EGKD…NEEM). The residue at position 742 (Tyr742) is a Phosphotyrosine. Ser775 is subject to Phosphoserine.

As to quaternary structure, interacts with RAB35 (GTP-bound form); the interaction is direct and probably recruits ACAP2 to membranes. Interacts with MICALL1; the interaction is indirect through RAB35.

The protein resides in the endosome membrane. It is found in the cell membrane. Its activity is regulated as follows. GAP activity stimulated by phosphatidylinositol 4,5-bisphosphate (PIP2) and phosphatidic acid. In terms of biological role, GTPase-activating protein (GAP) for ADP ribosylation factor 6 (ARF6). Doesn't show GAP activity for RAB35. This Oryctolagus cuniculus (Rabbit) protein is Arf-GAP with coiled-coil, ANK repeat and PH domain-containing protein 2 (ACAP2).